The primary structure comprises 769 residues: Subtilisin-like protease 3 (769 aa).

N-linked (GlcNAc...) asparagine glycans are attached at residues Asn68, Asn102, Asn108, Asn295, Asn316, and Asn356. Residues 293 to 302 are compositionally biased toward basic residues; that stretch reads KINHSNKHKN. The segment at 293–329 is disordered; the sequence is KINHSNKHKNNNNNNNNNDYHNNNKSNYHSHSSAKCQ. Over residues 303–325 the composition is skewed to low complexity; that stretch reads NNNNNNNNDYHNNNKSNYHSHSS. Residues 345-756 enclose the Peptidase S8 domain; the sequence is GYDIIQMEEG…GGFINVYDLV (412 aa). Asp372 serves as the catalytic Charge relay system. Residues 468–493 form a disordered region; the sequence is NIKSSDNIKSSDNINSSDNIKSSDNN. Asn482 and Asn515 each carry an N-linked (GlcNAc...) asparagine glycan. The active-site Charge relay system is His523. N-linked (GlcNAc...) asparagine glycans are attached at residues Asn584 and Asn616. Ser701 functions as the Charge relay system in the catalytic mechanism. Asn720 carries N-linked (GlcNAc...) asparagine glycosylation.

This sequence belongs to the peptidase S8 family.

It localises to the secreted. It catalyses the reaction Hydrolysis of proteins with broad specificity for peptide bonds, and a preference for a large uncharged residue in P1. Hydrolyzes peptide amides.. In terms of biological role, serine protease which may cleave PFN/profilin. This is Subtilisin-like protease 3 from Plasmodium falciparum (isolate 3D7).